Here is a 232-residue protein sequence, read N- to C-terminus: Transcriptional regulatory protein CpxR (232 aa).

Residues 3–115 enclose the Response regulatory domain; the sequence is KILLVDDDRE…ELVARIRAIL (113 aa). Asp-51 bears the 4-aspartylphosphate mark. Positions 131–230 form a DNA-binding region, ompR/PhoB-type; sequence SPTLEVDALS…LRGRGYLMVS (100 aa).

As to quaternary structure, interacts with cognate sensor kinase CpxA. Phosphorylated by CpxA.

Its subcellular location is the cytoplasm. The two-component system is activated by envelope stress such as overexpression of some (misfolded) periplasmic proteins. Its function is as follows. Response regulator member of the two-component regulatory system CpxA/CpxR which responds to envelope stress response by activating or, in some cases, repressing expression of downstream genes. Binds to the promoter regions of various genes in vitro, including ompC, cpxP, ryhB and mrkA and, when CpxR is phosphorylated, pecO. Represses expression of the major pilin of type 3 fimbriae MrkA as well as that of type 1 fimbriae FimA. Repression of expression of MrkA appears to be indirect, mediated by activation of the iron homeostasis regulator RyhB. The protein is Transcriptional regulatory protein CpxR of Klebsiella pneumoniae subsp. pneumoniae (strain HS11286).